We begin with the raw amino-acid sequence, 307 residues long: tRNA dimethylallyltransferase (307 aa).

9–16 provides a ligand contact to ATP; it reads GPTAVGKT. Position 11–16 (11–16) interacts with substrate; that stretch reads TAVGKT. The segment at 34-37 is interaction with substrate tRNA; sequence DSMQ.

Belongs to the IPP transferase family. As to quaternary structure, monomer. Requires Mg(2+) as cofactor.

It carries out the reaction adenosine(37) in tRNA + dimethylallyl diphosphate = N(6)-dimethylallyladenosine(37) in tRNA + diphosphate. Functionally, catalyzes the transfer of a dimethylallyl group onto the adenine at position 37 in tRNAs that read codons beginning with uridine, leading to the formation of N6-(dimethylallyl)adenosine (i(6)A). This chain is tRNA dimethylallyltransferase, found in Limosilactobacillus reuteri (strain DSM 20016) (Lactobacillus reuteri).